The primary structure comprises 404 residues: p-hydroxybenzoate hydroxylase (404 aa).

FAD contacts are provided by residues Glu-35, 45 to 50 (RIRAGI), and Gln-105. Residues Tyr-203, 214 to 216 (SMR), and Tyr-224 contribute to the substrate site. Residue Asp-288 coordinates FAD. Pro-295 is a binding site for substrate. Residue 301–302 (LN) participates in FAD binding.

The protein belongs to the aromatic-ring hydroxylase family. As to quaternary structure, homodimer. The cofactor is FAD.

It carries out the reaction 4-hydroxybenzoate + NADPH + O2 + H(+) = 3,4-dihydroxybenzoate + NADP(+) + H2O. It participates in aromatic compound metabolism; benzoate degradation via hydroxylation; 3,4-dihydroxybenzoate from benzoate: step 2/2. In terms of biological role, catalyzes the incorporation of an atom of dioxygen into p-hydroxybenzoate (p-OHB) to form 3,4-dihydroxybenzoate (3,4DOHB). The reaction occurs in two parts: reduction of the flavin adenine dinucleotide (FAD) in the enzyme by reduced nicotinamide adenine dinucleotide phosphate (NADPH) in response to binding p-hydroxybenzoate to the enzyme and oxidation of reduced FAD with oxygen to form a hydroperoxide, which then oxygenates p-hydroxybenzoate. This Acinetobacter baylyi (strain ATCC 33305 / BD413 / ADP1) protein is p-hydroxybenzoate hydroxylase (pobA).